Here is a 145-residue protein sequence, read N- to C-terminus: Flagellar assembly factor FliW (145 aa).

Belongs to the FliW family. Interacts with translational regulator CsrA and flagellin(s).

It is found in the cytoplasm. Acts as an anti-CsrA protein, binds CsrA and prevents it from repressing translation of its target genes, one of which is flagellin. Binds to flagellin and participates in the assembly of the flagellum. The sequence is that of Flagellar assembly factor FliW from Anoxybacillus flavithermus (strain DSM 21510 / WK1).